The following is a 431-amino-acid chain: Venom metalloproteinase 1 (431 aa).

Positions 1-22 (MDLFILTRFILFLSFFMKSIHC) are cleaved as a signal peptide. 4 N-linked (GlcNAc...) asparagine glycosylation sites follow: Asn-64, Asn-113, Asn-148, and Asn-187. The Peptidase M12B domain maps to 228 to 428 (DLLMKTSRRL…TSAACLKDTY (201 aa)). 2 disulfide bridges follow: Cys-340-Cys-423 and Cys-379-Cys-407. Position 363 (His-363) interacts with Zn(2+). The active site involves Glu-364. Zn(2+) contacts are provided by His-367 and His-373. Residue Asn-414 is glycosylated (N-linked (GlcNAc...) asparagine).

This sequence in the C-terminal section; belongs to the venom metalloproteinase (M12B) family. In terms of assembly, monomer. Zn(2+) is required as a cofactor. As to expression, expressed by the venom gland.

It localises to the secreted. Its activity is regulated as follows. The gelatinase activity is inhibited by EDTA. Functionally, the recombinant protein has gelatinase activity. In vivo, injection of this recombinant into fifth instar L.oleracea (host) larvae results in partial insect mortality associated with the molt to sixth instar, with surviving insects showing retarded development and growth. The sequence is that of Venom metalloproteinase 1 from Eulophus pennicornis (Parasitoid wasp).